The primary structure comprises 402 residues: Acetate kinase (402 aa).

Asn-7 lines the Mg(2+) pocket. An ATP-binding site is contributed by Lys-14. Arg-95 contributes to the substrate binding site. The active-site Proton donor/acceptor is the Asp-152. Residues His-212–Gly-216, Asp-286–Arg-288, and Gly-334–Asn-338 contribute to the ATP site. Position 388 (Glu-388) interacts with Mg(2+).

Belongs to the acetokinase family. As to quaternary structure, homodimer. Mg(2+) is required as a cofactor. The cofactor is Mn(2+).

The protein resides in the cytoplasm. The enzyme catalyses acetate + ATP = acetyl phosphate + ADP. The protein operates within metabolic intermediate biosynthesis; acetyl-CoA biosynthesis; acetyl-CoA from acetate: step 1/2. In terms of biological role, catalyzes the formation of acetyl phosphate from acetate and ATP. Can also catalyze the reverse reaction. The protein is Acetate kinase of Nitratidesulfovibrio vulgaris (strain ATCC 29579 / DSM 644 / CCUG 34227 / NCIMB 8303 / VKM B-1760 / Hildenborough) (Desulfovibrio vulgaris).